A 402-amino-acid polypeptide reads, in one-letter code: Multidrug resistance protein MdtH (402 aa).

Residues 1-12 lie on the Cytoplasmic side of the membrane; the sequence is MSRVSQARNLGK. Residues 13 to 33 traverse the membrane as a helical segment; that stretch reads YFLLIDNMLVVLGFFVVFPLI. Topologically, residues 34–98 are periplasmic; that stretch reads SIRFIDQMGW…GFATMGIAHE (65 aa). Residues 99-116 traverse the membrane as a helical segment; that stretch reads PWLLWFSCFLSGLGGTLF. Over 117-138 the chain is Cytoplasmic; it reads DPPRSALVVKLIRPEQRGRFFS. A helical membrane pass occupies residues 139 to 159; it reads LLMMQDSAGAVIGALLGSWLL. Residues 160–164 are Periplasmic-facing; it reads QYDFR. The chain crosses the membrane as a helical span at residues 165–185; the sequence is LVCATGAILFILCALFNAWLL. The Cytoplasmic portion of the chain corresponds to 186–213; the sequence is PAWKLSTVRTPVREGMRRVMSDKRFVTY. A helical membrane pass occupies residues 214-234; the sequence is VLTLAGYYMLAVQVMLMLPIM. At 235-243 the chain is on the periplasmic side; it reads VNDIAGSPA. Residues 244–264 traverse the membrane as a helical segment; that stretch reads AVKWMYAIEACLSLTLLYPIA. Residues 265–276 are Cytoplasmic-facing; that stretch reads RWSEKRFRLEHR. A helical transmembrane segment spans residues 277-297; the sequence is LMAGLLVMSLSMIPIGMVGNL. Over 298–299 the chain is Periplasmic; it reads QQ. The helical transmembrane segment at 300 to 320 threads the bilayer; the sequence is LFTLICAFYIGSVIAEPARET. Residues 321–339 lie on the Cytoplasmic side of the membrane; that stretch reads LSASLADARARGSYMGFSR. The chain crosses the membrane as a helical span at residues 340 to 360; sequence LGLAIGGAIGYIGGGWLFDMG. Over 361-367 the chain is Periplasmic; sequence KALTQPE. Residues 368–388 traverse the membrane as a helical segment; the sequence is LPWMMLGIIGFITFLALGWQF. The Cytoplasmic portion of the chain corresponds to 389–402; it reads SHKRTPRRMLEPGA.

It belongs to the major facilitator superfamily. DHA1 family. MdtH (TC 2.A.1.2.21) subfamily.

It localises to the cell inner membrane. The chain is Multidrug resistance protein MdtH from Salmonella paratyphi C (strain RKS4594).